The primary structure comprises 464 residues: mRNA capping enzyme LEF-4 (464 aa).

Residues 1–204 form an mRNA triphosphatase region; the sequence is MDYGDFVIEK…NVMCNIIADM (204 aa). Residues 205 to 464 are mRNA guanylyltransferase; the sequence is EALTDAQNIS…KHRRDRIVPN (260 aa). The active-site N6-GMP-lysine intermediate is Lys255.

This sequence belongs to the baculoviridae LEF-4 family. Interacts with LEF-8, LEF-9, and p47.

The protein resides in the host cytoplasm. It is found in the host nucleus. The enzyme catalyses a 5'-end diphospho-ribonucleoside in mRNA + GTP + H(+) = a 5'-end (5'-triphosphoguanosine)-ribonucleoside in mRNA + diphosphate. It catalyses the reaction a 5'-end triphospho-ribonucleoside in mRNA + H2O = a 5'-end diphospho-ribonucleoside in mRNA + phosphate + H(+). Functionally, component of the viral DNA-dependent RNA polymerase that catalyzes two reactions involved in viral RNA cap formation: an RNA 5'-triphosphatase that hydrolyzes the gamma phosphate of triphosphate-terminated RNA and a guanylyltransferase that reacts with GTP to form a covalent protein-guanylate adduct. Therefore plays an essential role in late and very late gene expression. The sequence is that of mRNA capping enzyme LEF-4 (LEF-4) from Autographa californica nuclear polyhedrosis virus (AcMNPV).